Consider the following 490-residue polypeptide: ATP synthase subunit beta, plastid (490 aa).

G170 to T177 is a binding site for ATP.

Belongs to the ATPase alpha/beta chains family. In terms of assembly, F-type ATPases have 2 components, CF(1) - the catalytic core - and CF(0) - the membrane proton channel. CF(1) has five subunits: alpha(3), beta(3), gamma(1), delta(1), epsilon(1). CF(0) has four main subunits: a(1), b(1), b'(1) and c(9-12).

Its subcellular location is the plastid thylakoid membrane. The catalysed reaction is ATP + H2O + 4 H(+)(in) = ADP + phosphate + 5 H(+)(out). Produces ATP from ADP in the presence of a proton gradient across the membrane. The catalytic sites are hosted primarily by the beta subunits. The protein is ATP synthase subunit beta, plastid of Cuscuta reflexa (Southern Asian dodder).